Consider the following 285-residue polypeptide: 4-diphosphocytidyl-2-C-methyl-D-erythritol kinase (285 aa).

Residue Lys14 is part of the active site. 97 to 107 (PMGGGIGGGSS) lines the ATP pocket. The active site involves Asp139.

Belongs to the GHMP kinase family. IspE subfamily.

It catalyses the reaction 4-CDP-2-C-methyl-D-erythritol + ATP = 4-CDP-2-C-methyl-D-erythritol 2-phosphate + ADP + H(+). It participates in isoprenoid biosynthesis; isopentenyl diphosphate biosynthesis via DXP pathway; isopentenyl diphosphate from 1-deoxy-D-xylulose 5-phosphate: step 3/6. In terms of biological role, catalyzes the phosphorylation of the position 2 hydroxy group of 4-diphosphocytidyl-2C-methyl-D-erythritol. This is 4-diphosphocytidyl-2-C-methyl-D-erythritol kinase from Tolumonas auensis (strain DSM 9187 / NBRC 110442 / TA 4).